Reading from the N-terminus, the 104-residue chain is ATP-dependent Clp protease adapter protein ClpS (104 aa).

The protein belongs to the ClpS family. As to quaternary structure, binds to the N-terminal domain of the chaperone ClpA.

Its function is as follows. Involved in the modulation of the specificity of the ClpAP-mediated ATP-dependent protein degradation. The chain is ATP-dependent Clp protease adapter protein ClpS from Hydrogenovibrio crunogenus (strain DSM 25203 / XCL-2) (Thiomicrospira crunogena).